The following is a 298-amino-acid chain: Acetylglutamate kinase (298 aa).

Residues 69–70, Arg91, and Asn196 contribute to the substrate site; that span reads GG.

It belongs to the acetylglutamate kinase family. ArgB subfamily.

Its subcellular location is the cytoplasm. It carries out the reaction N-acetyl-L-glutamate + ATP = N-acetyl-L-glutamyl 5-phosphate + ADP. The protein operates within amino-acid biosynthesis; L-arginine biosynthesis; N(2)-acetyl-L-ornithine from L-glutamate: step 2/4. Catalyzes the ATP-dependent phosphorylation of N-acetyl-L-glutamate. This is Acetylglutamate kinase from Granulibacter bethesdensis (strain ATCC BAA-1260 / CGDNIH1).